The following is a 361-amino-acid chain: MTVSTAQMRFWSPEVRELEPYVPGEQPKIQNLLKLNTNENPYPPSPKVVEAVQEVLHEQADVLRLYPDPDATVLKQAIAKQQNIDVSQVFVGNGSDEVLAHIFKAFFLQDGPILYPDITYSFYPVYSQFFGTKTKEIPLNENFEIDVRDYTQPNGGVIITNPNAPTSIALSLAEIEQVLQANPDRVVVIDEAYVDFGAESAVSLINRYENLVVCQTTSKSRSLAGLRVGFAIAQSHLIAALEAVKNSFNSYPIDRFAIAAAVASFEDQAYFEEQCQKVITSREKLVRDLTELGFNVLPSKANFIFATHSQHDAGQLAQKLREQGIIVRYFNKPRINQFLRITVGTNEQNARLVQTLKQDIL.

An N6-(pyridoxal phosphate)lysine modification is found at lysine 219.

This sequence belongs to the class-II pyridoxal-phosphate-dependent aminotransferase family. Histidinol-phosphate aminotransferase subfamily. In terms of assembly, homodimer. Requires pyridoxal 5'-phosphate as cofactor.

The catalysed reaction is L-histidinol phosphate + 2-oxoglutarate = 3-(imidazol-4-yl)-2-oxopropyl phosphate + L-glutamate. The protein operates within amino-acid biosynthesis; L-histidine biosynthesis; L-histidine from 5-phospho-alpha-D-ribose 1-diphosphate: step 7/9. The polypeptide is Histidinol-phosphate aminotransferase (Acinetobacter baumannii (strain ACICU)).